A 208-amino-acid chain; its full sequence is Outer-membrane lipoprotein carrier protein (208 aa).

Residues 1 to 22 (MKKIFAIAALSLPLFSHFPAFA) form the signal peptide.

It belongs to the LolA family. As to quaternary structure, monomer.

The protein resides in the periplasm. In terms of biological role, participates in the translocation of lipoproteins from the inner membrane to the outer membrane. Only forms a complex with a lipoprotein if the residue after the N-terminal Cys is not an aspartate (The Asp acts as a targeting signal to indicate that the lipoprotein should stay in the inner membrane). The sequence is that of Outer-membrane lipoprotein carrier protein from Shewanella halifaxensis (strain HAW-EB4).